The primary structure comprises 234 residues: Probable GTP-binding protein EngB (234 aa).

Residues 23 to 209 (AVPEVAFAGR…QRTVAGWLCL (187 aa)) enclose the EngB-type G domain. GTP contacts are provided by residues 31-38 (GRSNAGKS), 58-62 (GRTQH), 82-85 (DLPG), 149-152 (TKAD), and 187-190 (LFSS). 2 residues coordinate Mg(2+): Ser-38 and Thr-60. Residues 210 to 234 (PEAMPPSPDAEPAKKTPSPDAQRGE) are disordered.

Belongs to the TRAFAC class TrmE-Era-EngA-EngB-Septin-like GTPase superfamily. EngB GTPase family. The cofactor is Mg(2+).

In terms of biological role, necessary for normal cell division and for the maintenance of normal septation. This Ralstonia nicotianae (strain ATCC BAA-1114 / GMI1000) (Ralstonia solanacearum) protein is Probable GTP-binding protein EngB.